A 344-amino-acid polypeptide reads, in one-letter code: Glycerol-3-phosphate dehydrogenase [NAD(P)+] (344 aa).

Positions 23, 24, 44, and 118 each coordinate NADPH. Sn-glycerol 3-phosphate contacts are provided by K118, G147, and T149. A151 contacts NADPH. Sn-glycerol 3-phosphate contacts are provided by K203, D256, S266, R267, and N268. The Proton acceptor role is filled by K203. R267 is a binding site for NADPH. Residues V291 and E293 each contribute to the NADPH site.

This sequence belongs to the NAD-dependent glycerol-3-phosphate dehydrogenase family.

Its subcellular location is the cytoplasm. It catalyses the reaction sn-glycerol 3-phosphate + NAD(+) = dihydroxyacetone phosphate + NADH + H(+). The catalysed reaction is sn-glycerol 3-phosphate + NADP(+) = dihydroxyacetone phosphate + NADPH + H(+). The protein operates within membrane lipid metabolism; glycerophospholipid metabolism. In terms of biological role, catalyzes the reduction of the glycolytic intermediate dihydroxyacetone phosphate (DHAP) to sn-glycerol 3-phosphate (G3P), the key precursor for phospholipid synthesis. The chain is Glycerol-3-phosphate dehydrogenase [NAD(P)+] from Vibrio cholerae serotype O1 (strain ATCC 39541 / Classical Ogawa 395 / O395).